We begin with the raw amino-acid sequence, 163 residues long: Inorganic pyrophosphatase (163 aa).

Glutamate 9 provides a ligand contact to Mg(2+). Substrate contacts are provided by lysine 17, arginine 31, and tyrosine 43. Residues aspartate 53, aspartate 58, aspartate 85, and aspartate 90 each contribute to the Mg(2+) site. The Proton acceptor role is filled by aspartate 90. Tyrosine 127 provides a ligand contact to substrate.

This sequence belongs to the PPase family. In terms of assembly, homohexamer. It depends on Mg(2+) as a cofactor.

It is found in the cytoplasm. It catalyses the reaction diphosphate + H2O = 2 phosphate + H(+). Functionally, catalyzes the hydrolysis of inorganic pyrophosphate (PPi) forming two phosphate ions. The sequence is that of Inorganic pyrophosphatase from Leifsonia xyli subsp. xyli (strain CTCB07).